The sequence spans 143 residues: Large ribosomal subunit protein uL15 (143 aa).

Residues 20 to 52 (GRGIGSGKGKTAGRGHKGQHSRAGGYHKVGFEG) form a disordered region. Residues 30–39 (TAGRGHKGQH) are compositionally biased toward basic residues.

Belongs to the universal ribosomal protein uL15 family. As to quaternary structure, part of the 50S ribosomal subunit.

Binds to the 23S rRNA. This is Large ribosomal subunit protein uL15 from Coxiella burnetii (strain CbuK_Q154) (Coxiella burnetii (strain Q154)).